A 477-amino-acid polypeptide reads, in one-letter code: Cytochrome c-552 (477 aa).

The N-terminal stretch at 1–26 is a signal peptide; it reads MVRISTSISYLWGMVASLFLMMPAYS. H94 is a heme c binding site. Heme-binding residues include C122, C125, and K126. The heme c site is built by C160, C163, H164, C209, C212, and H213. Residues E215, Y216, K261, and Q263 each contribute to the Ca(2+) site. Y216 lines the substrate pocket. Residue H264 coordinates substrate. Residues H275, C282, C285, H286, H301, C314, C317, H318, and H393 each coordinate heme c.

Belongs to the cytochrome c-552 family. The cofactor is Ca(2+). Heme c is required as a cofactor.

It localises to the periplasm. It catalyses the reaction 6 Fe(III)-[cytochrome c] + NH4(+) + 2 H2O = 6 Fe(II)-[cytochrome c] + nitrite + 8 H(+). Its pathway is nitrogen metabolism; nitrate reduction (assimilation). Functionally, catalyzes the reduction of nitrite to ammonia, consuming six electrons in the process. This Pectobacterium carotovorum subsp. carotovorum (strain PC1) protein is Cytochrome c-552.